The primary structure comprises 130 residues: Small ribosomal subunit protein uS11c (130 aa).

It belongs to the universal ribosomal protein uS11 family. In terms of assembly, part of the 30S ribosomal subunit.

It localises to the plastid. The protein localises to the chloroplast. This is Small ribosomal subunit protein uS11c from Stigeoclonium helveticum (Green alga).